The following is a 364-amino-acid chain: Pre-small/secreted glycoprotein (364 aa).

Positions 1 to 32 are cleaved as a signal peptide; it reads MGVTGILQLPRDRFKRTSFFLWVIILFQRTFS. Asn40 carries N-linked (GlcNAc...) asparagine; by host glycosylation. 2 cysteine pairs are disulfide-bonded: Cys108–Cys135 and Cys121–Cys147. 5 N-linked (GlcNAc...) asparagine; by host glycosylation sites follow: Asn204, Asn228, Asn238, Asn257, and Asn268.

The protein belongs to the filoviruses glycoprotein family. Homodimer; disulfide-linked. The homodimers are linked by two disulfide bonds in a parallel orientation. As to quaternary structure, monomer. This precursor is processed into mature sGP and delta-peptide by host furin or furin-like proteases. The cleavage site corresponds to the furin optimal cleavage sequence [KR]-X-[KR]-R. Post-translationally, N-glycosylated. In terms of processing, O-glycosylated.

Its subcellular location is the secreted. Its function is as follows. Seems to possess an anti-inflammatory activity as it can reverse the barrier-decreasing effects of TNF alpha. Might therefore contribute to the lack of inflammatory reaction seen during infection in spite the of extensive necrosis and massive virus production. Does not seem to be involved in activation of primary macrophages. Does not seem to interact specifically with neutrophils. Viroporin that permeabilizes mammalian cell plasma membranes. It acts by altering permeation of ionic compounds and small molecules. This activity may lead to viral enterotoxic activity. This Epomops franqueti (Franquet's epauletted fruit bat) protein is Pre-small/secreted glycoprotein (GP).